The primary structure comprises 636 residues: Probable potassium transport system protein Kup (636 aa).

Helical transmembrane passes span 22 to 42, 64 to 84, 115 to 135, 150 to 170, 182 to 202, 220 to 240, 261 to 281, 293 to 313, 351 to 371, 383 to 403, 408 to 428, and 433 to 453; these read LGLLVAAVGVVYGDIGTSPLY, ILSLILWSLLWVVSFKYVMFI, LMVICGLIGASLFYGDSMITP, FDGIDHWVVPISLVVLVALFL, LFGPIMVTWFVVLGALGVHGI, FFVVHPGMGVAILGAVVLALT, WFILVLPALVLNYFGQGALLL, LLAPSWALLPLVGLATMATVI, IYIGAVNWTLMVGVVLLVIGF, VAVTGTMLMTTILVSAVMLLL, PVLAVPLLMGFLFVDGLFFAA, and IVQGGAFPVLAGGVLFLLMST.

This sequence belongs to the HAK/KUP transporter (TC 2.A.72) family.

The protein resides in the cell inner membrane. The catalysed reaction is K(+)(in) + H(+)(in) = K(+)(out) + H(+)(out). Functionally, transport of potassium into the cell. Likely operates as a K(+):H(+) symporter. This chain is Probable potassium transport system protein Kup, found in Pseudomonas putida (strain GB-1).